Consider the following 429-residue polypeptide: Tyrosine-protein kinase STYK1 (429 aa).

Residues 30-50 (VIIVPALLVGGFLILLAIILW) form a helical membrane-spanning segment. Positions 58 to 83 (SQRQSPGPRGTASVPASRGRSQEAAG) are disordered. The Protein kinase domain maps to 119–390 (LEVLEQIHSG…GQLLQRLEAA (272 aa)). ATP is bound by residues 125 to 133 (IHSGSCGTL) and lysine 152. The active-site Proton acceptor is the aspartate 256.

The protein belongs to the protein kinase superfamily. Tyr protein kinase family. As to expression, highly expressed in colon and small intestine. Weakly or not expressed in spleen, skeletal muscle, liver, kidney, heart and brain. Expressed in transformed kidney cell lines (COS-1 and HEK293T).

It is found in the membrane. It carries out the reaction L-tyrosyl-[protein] + ATP = O-phospho-L-tyrosyl-[protein] + ADP + H(+). In terms of biological role, probable tyrosine protein-kinase, which has strong transforming capabilities on a variety of cell lines including NIH 3T3 fibroblasts and on athymic nude mice. When overexpressed, it can also induce tumor cell invasion as well as metastasis in distant organs. May act by activating both MAP kinase and phosphatidylinositol 3'-kinases (PI3K) pathways. The polypeptide is Tyrosine-protein kinase STYK1 (Styk1) (Mus musculus (Mouse)).